A 139-amino-acid chain; its full sequence is Putative pre-16S rRNA nuclease (139 aa).

Belongs to the YqgF nuclease family.

The protein resides in the cytoplasm. Its function is as follows. Could be a nuclease involved in processing of the 5'-end of pre-16S rRNA. This Streptococcus pneumoniae (strain JJA) protein is Putative pre-16S rRNA nuclease.